The following is a 260-amino-acid chain: Ribosomal RNA small subunit methyltransferase G (260 aa).

S-adenosyl-L-methionine is bound by residues Gly94, Phe99, 117–119 (DST), 145–146 (AE), and Arg164. The tract at residues 236–260 (APTPPPYPRSPGTPKRQPLGQSNRP) is disordered. Residues 237–246 (PTPPPYPRSP) are compositionally biased toward pro residues.

The protein belongs to the methyltransferase superfamily. RNA methyltransferase RsmG family.

The protein resides in the cytoplasm. Functionally, specifically methylates the N7 position of a guanine in 16S rRNA. The protein is Ribosomal RNA small subunit methyltransferase G of Synechococcus sp. (strain JA-2-3B'a(2-13)) (Cyanobacteria bacterium Yellowstone B-Prime).